Reading from the N-terminus, the 489-residue chain is Glycogen synthase (489 aa).

Position 20 (R20) interacts with ADP-alpha-D-glucose.

This sequence belongs to the glycosyltransferase 1 family. Bacterial/plant glycogen synthase subfamily.

The catalysed reaction is [(1-&gt;4)-alpha-D-glucosyl](n) + ADP-alpha-D-glucose = [(1-&gt;4)-alpha-D-glucosyl](n+1) + ADP + H(+). Its pathway is glycan biosynthesis; glycogen biosynthesis. Functionally, synthesizes alpha-1,4-glucan chains using ADP-glucose. The sequence is that of Glycogen synthase from Chlorobium luteolum (strain DSM 273 / BCRC 81028 / 2530) (Pelodictyon luteolum).